The sequence spans 192 residues: Recombination protein RecR (192 aa).

Residues 51–66 (CQTCFHLSADPECEIC) form a C4-type zinc finger. The Toprim domain maps to 74-168 (GLICVVADSR…PVSRIAYGLP (95 aa)).

This sequence belongs to the RecR family.

Functionally, may play a role in DNA repair. It seems to be involved in an RecBC-independent recombinational process of DNA repair. It may act with RecF and RecO. In Parasynechococcus marenigrum (strain WH8102), this protein is Recombination protein RecR.